The following is a 501-amino-acid chain: MIGSLRNKFEHFKVSEKGGQNLSTTLPKLPPAKDLDRSTIYKYRYNYGVNLGALFVLEPWIFSKETICTIDGKEYDSEFDAISQQLKKHSSEDVAKMLSDHYKKYIDRIDWEWLSKDAHITALRIPIGYWHVEDGKHLDSLPFAPLRKVYELAKPWEKLGELINNAKKMSIGVLIDLHGLPGGANCDSHSGSKSGEAAFFHKEKYMTKVYKDILPAIINTMTLGNENIIGIQVVNEACFDNNPKGQKFYYSEAINTVEKLQPGLPVIISDGWWPQQWADWVKEKHFSEIVVIDSHVYRCFSDSDKSKDANSIIKDLPNTVNFPHEDADYTVGEFSGVLDGQTWNKTSGDRDAIVQKYVQTQADVFSHVASWGWFFWTLQFEYGDGGEWGLAPMMQKGNLPKRPHGDDLQVDKKKIDSIIHEHEAYWNGKGKNFEHWRFEDGIKTAVDDIIAFRKFDNSLIGRWHSWKSQRRAEYVSAKKDSEFMWEWDQGYQRGLDEFNKY.

Residue Glu-236 is the Proton donor of the active site. Glu-333 (nucleophile) is an active-site residue.

It belongs to the glycosyl hydrolase 5 (cellulase A) family.

It localises to the mitochondrion intermembrane space. This is an uncharacterized protein from Saccharomyces cerevisiae (strain ATCC 204508 / S288c) (Baker's yeast).